We begin with the raw amino-acid sequence, 460 residues long: Probable elastin-binding protein EbpS (460 aa).

Over residues 1-40 (MSNNNFKDDFEKNRQSINPDEHQTELKEDDKTNENKKEAD) the composition is skewed to basic and acidic residues. The disordered stretch occupies residues 1–277 (MSNNNFKDDF…NQYNDQSEGK (277 aa)). The span at 41–57 (SQNSLSNNSNQQFPPRN) shows a compositional bias: low complexity. Over residues 74–128 (QQDDKHQKNSDAKTTEGSLDDRYDEAQLQQQHDKSQQQNKTEKQSQDNRMKDGKD) the composition is skewed to basic and acidic residues. A compositionally biased stretch (low complexity) spans 177–192 (ATGAGIAGAAGVAGAA). Over residues 203 to 226 (DKQDSKHSNHENDEKSVKNDDQKQ) the composition is skewed to basic and acidic residues. Residues 264-273 (SNQNNQYNDQ) are compositionally biased toward low complexity. The chain crosses the membrane as a helical span at residues 285–305 (ILLPLIAAILILGAIAIFGGM). Residues 313-359 (SKSDDQKIANQSKKDSDKKDGAQSEDNKDKKSDSNKDKKSDSDKNAD) are compositionally biased toward basic and acidic residues. Positions 313 to 411 (SKSDDQKIAN…NQQATQGQQS (99 aa)) are disordered. Low complexity predominate over residues 364 to 411 (NSSSNPNATSTNNNDNVANNNSNYTNQNQQDNANQNSNNQQATQGQQS). In terms of domain architecture, LysM spans 410–458 (QSHTVYGQENLYRIAIQYYGEGTQANVDKIKRANGLSSNNIHNGQTLVI).

The protein resides in the cell membrane. The protein is Probable elastin-binding protein EbpS (ebpS) of Staphylococcus epidermidis (strain ATCC 35984 / DSM 28319 / BCRC 17069 / CCUG 31568 / BM 3577 / RP62A).